The sequence spans 317 residues: Transaldolase (317 aa).

Catalysis depends on lysine 132, which acts as the Schiff-base intermediate with substrate.

It belongs to the transaldolase family. Type 1 subfamily. Homodimer.

It localises to the cytoplasm. The catalysed reaction is D-sedoheptulose 7-phosphate + D-glyceraldehyde 3-phosphate = D-erythrose 4-phosphate + beta-D-fructose 6-phosphate. Its pathway is carbohydrate degradation; pentose phosphate pathway; D-glyceraldehyde 3-phosphate and beta-D-fructose 6-phosphate from D-ribose 5-phosphate and D-xylulose 5-phosphate (non-oxidative stage): step 2/3. Functionally, transaldolase is important for the balance of metabolites in the pentose-phosphate pathway. This is Transaldolase from Shewanella denitrificans (strain OS217 / ATCC BAA-1090 / DSM 15013).